The chain runs to 852 residues: Probable LRR receptor-like serine/threonine-protein kinase At1g05700 (852 aa).

The N-terminal stretch at 1 to 25 (MEEFRFLYLIYSAAFALCLVVSVLA) is a signal peptide. Residues 26 to 510 (QDQSGFISID…SCRKSNSKKL (485 aa)) lie on the Extracellular side of the membrane. Asparagine 138, asparagine 182, asparagine 231, asparagine 240, asparagine 258, asparagine 293, asparagine 400, asparagine 415, and asparagine 431 each carry an N-linked (GlcNAc...) asparagine glycan. 3 LRR repeats span residues 410–432 (RITSLNLSSSGLTGHISSSFSNL), 434–457 (MIQELDLSNNGLTGDIPEFLSKLK), and 458–479 (FLRVLNLENNTLTGSVPSELLE). Asparagine 466 is a glycosylation site (N-linked (GlcNAc...) asparagine). A helical transmembrane segment spans residues 511–531 (VIPLVASFAALFILLLLSGVF). Topologically, residues 532–852 (WRIRNRRNKS…LQREESNKNY (321 aa)) are cytoplasmic. Phosphothreonine is present on threonine 561. Residues 570–843 (NNFGQVLGKG…HIVRGLNECL (274 aa)) enclose the Protein kinase domain. ATP-binding positions include 576–584 (LGKGGFGTV) and lysine 597. Phosphotyrosine is present on tyrosine 642. The active-site Proton acceptor is the aspartate 693. Phosphoserine is present on residues serine 697 and serine 727. Residues threonine 728 and threonine 733 each carry the phosphothreonine modification.

Belongs to the protein kinase superfamily. Ser/Thr protein kinase family.

Its subcellular location is the membrane. It catalyses the reaction L-seryl-[protein] + ATP = O-phospho-L-seryl-[protein] + ADP + H(+). It carries out the reaction L-threonyl-[protein] + ATP = O-phospho-L-threonyl-[protein] + ADP + H(+). This is Probable LRR receptor-like serine/threonine-protein kinase At1g05700 from Arabidopsis thaliana (Mouse-ear cress).